A 577-amino-acid polypeptide reads, in one-letter code: Cytochrome P450 714D1 (577 aa).

The Lumenal segment spans residues 1–3 (MES). Residues 4–24 (FFVFFTAAALPVVVAAAVIAG) traverse the membrane as a helical; Signal-anchor for type III membrane protein segment. Topologically, residues 25–577 (LCITAAWLAR…STAPVHSSHN (553 aa)) are cytoplasmic. A disordered region spans residues 315–343 (REHGGKAAPPSPPERDFLGSIIENSGGQP). Position 504 (Cys504) interacts with heme.

It belongs to the cytochrome P450 family. Heme serves as cofactor. In terms of tissue distribution, expressed in rapidly elongating or dividing tissues, including the shoot apical meristem, the intercalary meristem and elongating zones of internodes, and panicle but not in young seedlings, roots and leaves. During the heading stage, the highest expression is detected in the flowering spikelets, anthers, the divisional zone and the node of the uppermost internode.

It localises to the endoplasmic reticulum membrane. Functionally, catalyzes the 16alpha,17-epoxidation on non-13-hydroxylated gibberellins (GAs), including GA4, GA9, and GA12. No activity with GA1, GA20, GA53 or ent-kaurenoic acid. Reduces the biological activity of GAs. This chain is Cytochrome P450 714D1 (CYP714D1), found in Oryza sativa subsp. japonica (Rice).